A 229-amino-acid chain; its full sequence is 2,3-bisphosphoglycerate-dependent phosphoglycerate mutase 2 (229 aa).

Substrate is bound by residues 12-19, 25-26, Arg65, 92-95, Lys103, and 119-120; these read RHGESVAN, TG, ERHY, and RR. Catalysis depends on His13, which acts as the Tele-phosphohistidine intermediate. Residue Glu92 is the Proton donor/acceptor of the active site.

Belongs to the phosphoglycerate mutase family. BPG-dependent PGAM subfamily.

The catalysed reaction is (2R)-2-phosphoglycerate = (2R)-3-phosphoglycerate. Its pathway is carbohydrate degradation; glycolysis; pyruvate from D-glyceraldehyde 3-phosphate: step 3/5. Functionally, catalyzes the interconversion of 2-phosphoglycerate and 3-phosphoglycerate. This is 2,3-bisphosphoglycerate-dependent phosphoglycerate mutase 2 from Lactobacillus johnsonii (strain CNCM I-12250 / La1 / NCC 533).